We begin with the raw amino-acid sequence, 199 residues long: uncharacterized protein (199 aa).

It localises to the mitochondrion. This is an uncharacterized protein from Schizosaccharomyces pombe (strain 972 / ATCC 24843) (Fission yeast).